A 402-amino-acid chain; its full sequence is Palmitoyltransferase PFA4 (402 aa).

Topologically, residues 1–8 (MAVQLKWP) are cytoplasmic. Residues 9 to 29 (IIGVVIPCVLIAMVAYGSHYF) traverse the membrane as a helical segment. The Lumenal segment spans residues 30 to 39 (VFRTNLSRTE). A helical transmembrane segment spans residues 40–60 (QILYEVYVCIVWLSYYLAIVV). Topologically, residues 61–125 (DPGSPPKNFT…GHNNLPHFLR (65 aa)) are cytoplasmic. Positions 78–128 (RWCKKCQNYKPERSHHCKTCNKCVLKMDHHCPWTYNCVGHNNLPHFLRFVF) constitute a DHHC domain. The active-site S-palmitoyl cysteine intermediate is Cys-108. Residues 126–146 (FVFFLIVGMTYVLFQLGKQVL) form a helical membrane-spanning segment. Residues 147–165 (HYYDSSKLPSYLIDKKEMC) are Lumenal-facing. The chain crosses the membrane as a helical span at residues 166 to 186 (AVIFLLPVTFFVFVSIIILFV). The Cytoplasmic portion of the chain corresponds to 187–402 (RCMINLLFRG…LVSKDEISNN (216 aa)).

The protein belongs to the DHHC palmitoyltransferase family. PFA4 subfamily.

It localises to the endoplasmic reticulum membrane. The catalysed reaction is L-cysteinyl-[protein] + hexadecanoyl-CoA = S-hexadecanoyl-L-cysteinyl-[protein] + CoA. Mediates the reversible addition of palmitate to target proteins, thereby regulating their membrane association and biological function. The polypeptide is Palmitoyltransferase PFA4 (Debaryomyces hansenii (strain ATCC 36239 / CBS 767 / BCRC 21394 / JCM 1990 / NBRC 0083 / IGC 2968) (Yeast)).